A 599-amino-acid chain; its full sequence is Elongation factor 4 (599 aa).

The 183-residue stretch at 5 to 187 (NHIRNFSIIA…QIVQLVPPPE (183 aa)) folds into the tr-type G domain. Residues 17-22 (DHGKST) and 134-137 (NKMD) contribute to the GTP site.

Belongs to the TRAFAC class translation factor GTPase superfamily. Classic translation factor GTPase family. LepA subfamily.

Its subcellular location is the cell inner membrane. It catalyses the reaction GTP + H2O = GDP + phosphate + H(+). In terms of biological role, required for accurate and efficient protein synthesis under certain stress conditions. May act as a fidelity factor of the translation reaction, by catalyzing a one-codon backward translocation of tRNAs on improperly translocated ribosomes. Back-translocation proceeds from a post-translocation (POST) complex to a pre-translocation (PRE) complex, thus giving elongation factor G a second chance to translocate the tRNAs correctly. Binds to ribosomes in a GTP-dependent manner. In Hahella chejuensis (strain KCTC 2396), this protein is Elongation factor 4.